We begin with the raw amino-acid sequence, 505 residues long: Glutamate--tRNA ligase (505 aa).

Residues 12–22 (PSPTGALHIGG) carry the 'HIGH' region motif. The short motif at 260 to 264 (KLSKR) is the 'KMSKS' region element. Lys263 provides a ligand contact to ATP.

It belongs to the class-I aminoacyl-tRNA synthetase family. Glutamate--tRNA ligase type 1 subfamily. Monomer.

Its subcellular location is the cytoplasm. It carries out the reaction tRNA(Glu) + L-glutamate + ATP = L-glutamyl-tRNA(Glu) + AMP + diphosphate. Functionally, catalyzes the attachment of glutamate to tRNA(Glu) in a two-step reaction: glutamate is first activated by ATP to form Glu-AMP and then transferred to the acceptor end of tRNA(Glu). The polypeptide is Glutamate--tRNA ligase (Bacteroides fragilis (strain ATCC 25285 / DSM 2151 / CCUG 4856 / JCM 11019 / LMG 10263 / NCTC 9343 / Onslow / VPI 2553 / EN-2)).